Here is a 792-residue protein sequence, read N- to C-terminus: MKFSENWLRNHVPIQANRDVLVATLTAIGLEVENVAVLGEALDLIVVARIVNVVPHPESDRLQICQVDAAQDTLLQIVCGASNVRPGLVVPLALLGAKIGALTIKSTTLRGVESNGMLCSAKELGLDTEASGLMELPDDAPIGTPLADYLALPDASIEIKLTPNRADCFSVRGIAFDVAAACASEVTPLHIDEIPAVSARTLPVELHAGANAPRYCGCVIEGIDPAAPTPVWMAERLRRSGIRPVSLLVDITQYVMLELGQPMHAFDVDTLRGPIGVRLSRNDEALKLLDGRTVVLDNDFLVVTDADQPIALAGLIGGWETRITDTTVNVFLEAAHFAPVAIMGRGRKLGLHTDASHRFERGVDPALPPQAIAFATRLILELAGGKPGSLIRVELPEYLPAPASILLRRTRIARLLGIVIDDVEVERILHALGMQVTTQAEGWRVVAPSRRFDIAIEEDLIEELVRIRGYEHLPTALPIGASHIAMPSETRLDMTSVRRQLIARELQETINYAFIDAELLRRWQLNTGQVMLMNPLSAELAVIRPRLLPGLVAALGRNIARQLERVRLFELGNVFTASDEAGAAPLETQHVAAAVCGDAFALQWGEQARKVDFYDLKGDLESLAAASGAVLTFHSSAQPWGHPGRSADVWCDDTCIGWIGQLHPALTQTLEINVDVIAFELALEPLVRGALPRAHALSRFPFVRRDLACVVPEHVTWSELAITVRDVIGSLLRDVKLFDRYVGKGIEPGFKSLAIGLILQDDTRTLIDRDVDDIMAKVVMAIQQRHDVRIRS.

The tRNA-binding domain occupies 39 to 147 (GEALDLIVVA…DDAPIGTPLA (109 aa)). Residues 400–475 (PAPASILLRR…RIRGYEHLPT (76 aa)) enclose the B5 domain. Positions 453, 459, 462, and 463 each coordinate Mg(2+). In terms of domain architecture, FDX-ACB spans 698–791 (SRFPFVRRDL…IQQRHDVRIR (94 aa)).

The protein belongs to the phenylalanyl-tRNA synthetase beta subunit family. Type 1 subfamily. Tetramer of two alpha and two beta subunits. It depends on Mg(2+) as a cofactor.

The protein resides in the cytoplasm. The enzyme catalyses tRNA(Phe) + L-phenylalanine + ATP = L-phenylalanyl-tRNA(Phe) + AMP + diphosphate + H(+). The sequence is that of Phenylalanine--tRNA ligase beta subunit (pheT) from Xylella fastidiosa (strain 9a5c).